Here is a 664-residue protein sequence, read N- to C-terminus: Fructose-1,6-bisphosphatase class 3 (664 aa).

Belongs to the FBPase class 3 family. Requires Mn(2+) as cofactor.

The catalysed reaction is beta-D-fructose 1,6-bisphosphate + H2O = beta-D-fructose 6-phosphate + phosphate. It functions in the pathway carbohydrate biosynthesis; gluconeogenesis. This is Fructose-1,6-bisphosphatase class 3 from Bacteroides thetaiotaomicron (strain ATCC 29148 / DSM 2079 / JCM 5827 / CCUG 10774 / NCTC 10582 / VPI-5482 / E50).